A 448-amino-acid chain; its full sequence is Chromogranin-A (448 aa).

The N-terminal stretch at 1–18 (MRSAVVLALLLCAGQVIA) is a signal peptide. A disulfide bridge links Cys35 with Cys56. The segment at 116–251 (LKEVTEEALS…AFNPHPSLSY (136 aa)) is disordered. 2 stretches are compositionally biased toward basic and acidic residues: residues 129–139 (AEARGDSKEVE) and 158–175 (QESR…KEAI). Ser197 is modified (phosphoserine). The segment covering 205 to 222 (VDREKGLGAERGQQAKRE) has biased composition (basic and acidic residues). Residues 223–238 (EEEDEAGEKADAEEEG) are compositionally biased toward acidic residues. 2 positions are modified to phosphoserine: Ser258 and Ser288. The tract at residues 263–429 (LVVDGARKTG…PEDQELESLS (167 aa)) is disordered. Gly308 is subject to Glycine amide. The segment covering 310 to 350 (KSRELEQEKEQERLSKEWEDAKRWSKMDQLAKELTAEKRLE) has biased composition (basic and acidic residues). Phosphoserine occurs at positions 311, 324, and 362. Position 363 is a methionine sulfoxide (Met363). 4 positions are modified to phosphoserine: Ser389, Ser393, Ser415, and Ser429. Basic and acidic residues predominate over residues 405–422 (YPEEKKEEEGSANRRPED). Ser415 carries an O-linked (Xyl...) (chondroitin sulfate) serine glycan.

It belongs to the chromogranin/secretogranin protein family. Self-interacts; self-assembly is promoted in vitro by chondroitin sulfate attachment which occurs at mildly acidic pH conditions. Interacts with SCG3. Interacts with ITPR1 in the secretory granules. O-glycosylated; contains chondroitin sulfate (CS). CS attachment is pH-dependent, being observed at mildly acidic conditions of pH 5 but not at neutral pH, and promotes self-assembly in vitro. As to expression, highly expressed in adrenal medulla and pituitary gland. Weaker expression detected in cerebrum, cerebellum, spinal cord, liver, thyroid gland, striated muscle, lung, spleen, kidney, parotid gland, and sublingual gland.

Its subcellular location is the secreted. The protein localises to the cytoplasmic vesicle. It localises to the secretory vesicle. It is found in the neuronal dense core vesicle. Functionally, strongly inhibits glucose induced insulin release from the pancreas. Inhibits catecholamine release from chromaffin cells and noradrenergic neurons by acting as a non-competitive nicotinic cholinergic antagonist. Can induce mast cell migration, degranulation and production of cytokines and chemokines. Its function is as follows. Regulates granule biogenesis in endocrine cells by up-regulating the transcription of protease nexin 1 (SERPINE2) via a cAMP-PKA-SP1 pathway. This leads to inhibition of granule protein degradation in the Golgi complex which in turn promotes granule formation. The protein is Chromogranin-A (CHGA) of Equus caballus (Horse).